The primary structure comprises 332 residues: Palmitoyltransferase ZDHHC15B (332 aa).

Topologically, residues 1–14 (MALSRALRCCQRIF) are cytoplasmic. The chain crosses the membrane as a helical span at residues 15 to 35 (SWIPVIIISSVVLWSYYAYVF). The Lumenal portion of the chain corresponds to 36 to 50 (ELCFVTLSNNLERVT). Residues 51 to 71 (YLLIFHVCFIMFCWTYWKAIF) form a helical membrane-spanning segment. The Cytoplasmic segment spans residues 72 to 166 (TPPSTPTKKF…NNCVGFSNYK (95 aa)). A DHHC domain is found at 123–173 (RFCDRCQVIKPDRCHHCSVCETCVLKMDHHCPWVNNCVGFSNYKFFLLFLS). Zn(2+) contacts are provided by Cys125 and Cys128. Residue Lys132 coordinates substrate. The Zn(2+) site is built by His138, Cys139, Cys142, Cys145, and His152. The S-palmitoyl cysteine intermediate role is filled by Cys153. Position 159 (Cys159) interacts with Zn(2+). The chain crosses the membrane as a helical span at residues 167 to 187 (FFLLFLSYSMIYCVFIASTVF). Topologically, residues 188–204 (QYFLKFWVGDLPNGPAK) are lumenal. Residues 205–228 (FHVLFLLFVALMFFVSLMFLFGYH) form a helical membrane-spanning segment. Over 229-332 (CWLVAKNRST…GSSLLIRTES (104 aa)) the chain is Cytoplasmic. Positions 305–332 (EEKWVEDGGSDEESADENGSSLLIRTES) are disordered.

This sequence belongs to the DHHC palmitoyltransferase family. In terms of processing, autopalmitoylated (in vitro).

The protein resides in the golgi apparatus membrane. It localises to the postsynaptic density. It carries out the reaction L-cysteinyl-[protein] + hexadecanoyl-CoA = S-hexadecanoyl-L-cysteinyl-[protein] + CoA. The enzyme catalyses L-cysteinyl-[protein] + tetradecanoyl-CoA = S-tetradecanoyl-L-cysteinyl-[protein] + CoA. The catalysed reaction is L-cysteinyl-[protein] + octadecanoyl-CoA = S-octadecanoyl-L-cysteinyl-[protein] + CoA. Its function is as follows. Palmitoyltransferase that catalyzes the addition of palmitate onto various protein substrates. Has no stringent fatty acid selectivity and in addition to palmitate can also transfer onto target proteins myristate from tetradecanoyl-CoA and stearate from octadecanoyl-CoA. May thereby regulate target proteins association and localization to membranes. In the nervous system, probably catalyzes the palmitoylation of synaptic proteins and is involved in the differentiation of dopaminergic neurons and the development of the diencephalon. This chain is Palmitoyltransferase ZDHHC15B (zdhhc15b), found in Danio rerio (Zebrafish).